A 1487-amino-acid chain; its full sequence is Protein cft1 (1487 aa).

The span at 486 to 504 shows a compositional bias: acidic residues; that stretch reads DLDLDDEDLEDDDDDDLYG. The interval 486–513 is disordered; that stretch reads DLDLDDEDLEDDDDDDLYGEESASPEQA.

Belongs to the CFT1 family.

It localises to the nucleus. Its function is as follows. RNA-binding component of the cleavage and polyadenylation factor (CPF) complex, which plays a key role in polyadenylation-dependent pre-mRNA 3'-end formation and cooperates with cleavage factors including the CFIA complex and hrp1/CFIB. Involved in poly(A) site recognition. May be involved in coupling transcription termination and mRNA 3'-end formation. The polypeptide is Protein cft1 (paa-3) (Neurospora crassa (strain ATCC 24698 / 74-OR23-1A / CBS 708.71 / DSM 1257 / FGSC 987)).